A 380-amino-acid polypeptide reads, in one-letter code: Probable peptidoglycan glycosyltransferase FtsW (380 aa).

10 helical membrane-spanning segments follow: residues 14–34 (LLWCTLCLLLIGVTMVTSSSI), 52–72 (ILYLVILFFIFKIFLDVPISF), 79–99 (IILLISISTLLLVLIIGNSIH), 112–131 (MQPSELSKLAMFCYLSNYLS), 141–161 (FGGFLKPIIIISFPLILLLVE), 162–182 (PDLGTTIVILLTTLSLLFISG), 188–208 (FIPTILIIVVTTTVLIIKSPY), 268–288 (IIGEELGYIGACTILFMIFFI), 304–324 (IFFSGYFAFSIGLWLIFQTLI), and 341–361 (PLISYGGSSLIIVSIAIIILI).

It belongs to the SEDS family. FtsW subfamily.

It localises to the cell membrane. It carries out the reaction [GlcNAc-(1-&gt;4)-Mur2Ac(oyl-L-Ala-gamma-D-Glu-L-Lys-D-Ala-D-Ala)](n)-di-trans,octa-cis-undecaprenyl diphosphate + beta-D-GlcNAc-(1-&gt;4)-Mur2Ac(oyl-L-Ala-gamma-D-Glu-L-Lys-D-Ala-D-Ala)-di-trans,octa-cis-undecaprenyl diphosphate = [GlcNAc-(1-&gt;4)-Mur2Ac(oyl-L-Ala-gamma-D-Glu-L-Lys-D-Ala-D-Ala)](n+1)-di-trans,octa-cis-undecaprenyl diphosphate + di-trans,octa-cis-undecaprenyl diphosphate + H(+). Its pathway is cell wall biogenesis; peptidoglycan biosynthesis. Functionally, peptidoglycan polymerase that is essential for cell division. The polypeptide is Probable peptidoglycan glycosyltransferase FtsW (Buchnera aphidicola subsp. Baizongia pistaciae (strain Bp)).